Reading from the N-terminus, the 557-residue chain is Tryptophan 2-monooxygenase (557 aa).

Positions 49, 69, 71, 77, and 98 each coordinate FMN. R98 contributes to the substrate binding site.

It belongs to the tryptophan 2-monooxygenase family. As to quaternary structure, monomer. The cofactor is FMN.

The catalysed reaction is L-tryptophan + O2 = indole-3-acetamide + CO2 + H2O. The protein operates within plant hormone metabolism; auxin biosynthesis. In Pseudomonas savastanoi (Pseudomonas syringae pv. savastanoi), this protein is Tryptophan 2-monooxygenase (iaaM).